The chain runs to 1005 residues: DNA polymerase (1005 aa).

The protein belongs to the DNA polymerase type-B family. As to quaternary structure, interacts with OPG148. Component of the Uracil-DNA glycosylase(UDG)-OPG148-polymerase complex; OPG148 and OPG116/UDG form a heterodimeric processivity factor that associates with OPG071 to form the processive polymerase holoenzyme.

It catalyses the reaction DNA(n) + a 2'-deoxyribonucleoside 5'-triphosphate = DNA(n+1) + diphosphate. In terms of biological role, catalyzes DNA synthesis. Acquires processivity by associating with a heterodimeric processivity factor comprised of the viral OPG148 and OPG116 proteins, thereby forming the DNA polymerase holoenzyme. Displays 3'- to 5' exonuclease activity. Might participate in viral DNA recombination. Does not perform OPG116/D4synthesis across an abasic site. This Variola virus protein is DNA polymerase (OPG071).